A 304-amino-acid chain; its full sequence is Secreted mono- and diacylglycerol lipase LIP1 (304 aa).

The first 19 residues, 1 to 19 (MLFSRFVLLAFGSVAAVSA), serve as a signal peptide directing secretion. A glycan (O-linked (Man...) threonine) is linked at threonine 32. The cysteines at positions 57 and 297 are disulfide-linked. The Nucleophile role is filled by serine 171. The active site involves aspartate 228. N-linked (GlcNAc...) asparagine glycosylation is present at asparagine 253. Histidine 281 is an active-site residue.

Belongs to the AB hydrolase superfamily. Lipase family. Class 3 subfamily.

It localises to the secreted. The protein resides in the cell wall. The enzyme catalyses a monoacylglycerol + H2O = glycerol + a fatty acid + H(+). The catalysed reaction is a diacylglycerol + H2O = a monoacylglycerol + a fatty acid + H(+). Its activity is regulated as follows. RHC 80267, a well-known inhibitor of diacylglycerol lipases from mammals, also acts as an inhibitor for LIP1/SMG1. Its function is as follows. Secreted lipase involved in Dandruff and seborrheic dermatitis (D/SD) probably via lipase-mediated breakdown of sebaceous lipids and release of irritating free fatty acids. Shows activity against monoglyceride and diglyceride substrates, but not triglyceride substrates and does not exhibit regio-selective production of diacylglycerols. Able to hydrolyze diacylglycerols such as distearin, dilinolein, dipalmitoylglycerol and dipalmitolein. Cleaves oleic acid from 1,2 isomers of diolein on both the 1 and the 2 position of the glycerol backbone, resulting mainly in free fatty acids but no monoolein is detected. Shows activity on monoolein and liberates mostly free fatty acids, but can also perform the reverse reaction and produce diolein. This chain is Secreted mono- and diacylglycerol lipase LIP1, found in Malassezia globosa (strain ATCC MYA-4612 / CBS 7966) (Dandruff-associated fungus).